Consider the following 267-residue polypeptide: Small ribosomal subunit protein uS3 (267 aa).

One can recognise a KH type-2 domain in the interval 38–106 (IRKLLATGME…QVQLNILEVK (69 aa)). Positions 215–267 (TAASAPAGDRDRPRRERPSRPRRSGSTGTTATSTEAGRAATAVVEAPAENQEG) are disordered. Basic and acidic residues predominate over residues 222–233 (GDRDRPRRERPS). Over residues 238 to 256 (SGSTGTTATSTEAGRAATA) the composition is skewed to low complexity.

It belongs to the universal ribosomal protein uS3 family. Part of the 30S ribosomal subunit. Forms a tight complex with proteins S10 and S14.

Its function is as follows. Binds the lower part of the 30S subunit head. Binds mRNA in the 70S ribosome, positioning it for translation. The polypeptide is Small ribosomal subunit protein uS3 (Nocardia farcinica (strain IFM 10152)).